The chain runs to 381 residues: Opsin Rh2 (381 aa).

Over 1-56 the chain is Extracellular; the sequence is MERSHLPETPFDLAHSGPRFQAQSSGNGSVLDNVLPDMAHLVNPYWSRFAPMDPMM. An N-linked (GlcNAc...) asparagine glycan is attached at Asn27. The helical transmembrane segment at 57-81 threads the bilayer; that stretch reads SKILGLFTLAIMIISCCGNGVVVYI. The Cytoplasmic segment spans residues 82-93; that stretch reads FGGTKSLRTPAN. A helical transmembrane segment spans residues 94–119; it reads LLVLNLAFSDFCMMASQSPVMIINFY. Topologically, residues 120–133 are extracellular; that stretch reads YETWVLGPLWCDIY. Cys130 and Cys207 form a disulfide bridge. Residues 134–153 traverse the membrane as a helical segment; that stretch reads AGCGSLFGCVSIWSMCMIAF. Residues 154-172 lie on the Cytoplasmic side of the membrane; sequence DRYNVIVKGINGTPMTIKT. Residues 173–196 form a helical membrane-spanning segment; it reads SIMKILFIWMMAVFWTVMPLIGWS. At 197 to 220 the chain is on the extracellular side; it reads AYVPEGNLTACSIDYMTRMWNPRS. A helical transmembrane segment spans residues 221-248; it reads YLITYSLFVYYTPLFLICYSYWFIIAAV. Topologically, residues 249–283 are cytoplasmic; sequence AAHEKAMREQAKKMNVKSLRSSEDCDKSAEGKLAK. Residues 284-307 traverse the membrane as a helical segment; that stretch reads VALTTISLWFMAWTPYLVICYFGL. Residues 308-314 lie on the Extracellular side of the membrane; that stretch reads FKIDGLT. Residues 315 to 339 traverse the membrane as a helical segment; sequence PLTTIWGATFAKTSAVYNPIVYGIS. Lys326 bears the N6-(retinylidene)lysine mark. Residues 340-381 are Cytoplasmic-facing; sequence HPKYRIVLKEKCPMCVFGNTDEPKPDAPASDTETTSEADSKA. Residues 359 to 381 are disordered; the sequence is TDEPKPDAPASDTETTSEADSKA. A compositionally biased stretch (polar residues) spans 370–381; the sequence is DTETTSEADSKA.

It belongs to the G-protein coupled receptor 1 family. Opsin subfamily. Phosphorylated on some or all of the serine and threonine residues present in the C-terminal region. As to expression, predominant opsin expressed in the dorsal ocelli.

The protein localises to the membrane. Visual pigments are the light-absorbing molecules that mediate vision. They consist of an apoprotein, opsin, covalently linked to cis-retinal. The sequence is that of Opsin Rh2 (Rh2) from Drosophila melanogaster (Fruit fly).